Here is a 130-residue protein sequence, read N- to C-terminus: Leptin receptor gene-related protein (130 aa).

A run of 4 helical transmembrane segments spans residues 7–27, 32–52, 68–88, and 99–119; these read LVALSFSGALGLTFLLLGCAL, QYWPMFVLIFYILSPIPNLIA, LAYFLTTGIVVSAYGLPVVLA, and GLVMAGNCVIFLTILGFFLIF.

The protein belongs to the OB-RGRP/VPS55 family.

The protein localises to the golgi apparatus membrane. Its subcellular location is the endosome membrane. Its function is as follows. Involved in protein trafficking. May be involved in the down-regulation of membrane protein levels. This is Leptin receptor gene-related protein (leprot) from Danio rerio (Zebrafish).